The primary structure comprises 861 residues: Rod cGMP-specific 3',5'-cyclic phosphodiesterase subunit alpha (861 aa).

Residue Gly-2 is modified to N-acetylglycine. GAF domains follow at residues 73–222 and 254–431; these read QAER…NLIM and DIER…GWSV. One can recognise a PDEase domain in the interval 483–816; that stretch reads EEEELAEILQ…KEWKALADEY (334 aa). Residue His-559 is the Proton donor of the active site. His-563, His-599, Asp-600, and Asp-720 together coordinate a divalent metal cation. Residues 821–861 form a disordered region; it reads KALEEEKQKQQTAKQGAAGDQPGGNPSPAGGAPASKSCCIQ. Low complexity predominate over residues 830 to 861; sequence QQTAKQGAAGDQPGGNPSPAGGAPASKSCCIQ. Position 858 is a cysteine methyl ester (Cys-858). Cys-858 carries the S-farnesyl cysteine lipid modification. Residues 859-861 constitute a propeptide, removed in mature form; that stretch reads CIQ.

This sequence belongs to the cyclic nucleotide phosphodiesterase family. Oligomer composed of two catalytic chains (alpha and beta), an inhibitory chain (gamma) and the delta chain. The cofactor is a divalent metal cation.

Its subcellular location is the cell membrane. The protein resides in the cell projection. It is found in the cilium. It localises to the photoreceptor outer segment. The enzyme catalyses 3',5'-cyclic GMP + H2O = GMP + H(+). Functionally, rod-specific cGMP phosphodiesterase that catalyzes the hydrolysis of 3',5'-cyclic GMP. This protein participates in processes of transmission and amplification of the visual signal. The chain is Rod cGMP-specific 3',5'-cyclic phosphodiesterase subunit alpha from Canis lupus familiaris (Dog).